We begin with the raw amino-acid sequence, 98 residues long: Co-chaperonin GroES 5 (98 aa).

This sequence belongs to the GroES chaperonin family. As to quaternary structure, heptamer of 7 subunits arranged in a ring. Interacts with the chaperonin GroEL.

Its subcellular location is the cytoplasm. Functionally, together with the chaperonin GroEL, plays an essential role in assisting protein folding. The GroEL-GroES system forms a nano-cage that allows encapsulation of the non-native substrate proteins and provides a physical environment optimized to promote and accelerate protein folding. GroES binds to the apical surface of the GroEL ring, thereby capping the opening of the GroEL channel. This Mesorhizobium japonicum (strain LMG 29417 / CECT 9101 / MAFF 303099) (Mesorhizobium loti (strain MAFF 303099)) protein is Co-chaperonin GroES 5.